The following is a 279-amino-acid chain: 2-dehydropantoate 2-reductase (279 aa).

Residues 6 to 11 (GLGAVG), K66, and N86 each bind NADP(+). Catalysis depends on K158, which acts as the Proton donor. Substrate is bound by residues K158, N162, N166, N176, and 225-228 (NLSS). E240 provides a ligand contact to NADP(+).

This sequence belongs to the ketopantoate reductase family.

The protein resides in the cytoplasm. It catalyses the reaction (R)-pantoate + NAD(+) = 2-dehydropantoate + NADH + H(+). The catalysed reaction is (R)-pantoate + NADP(+) = 2-dehydropantoate + NADPH + H(+). It functions in the pathway cofactor biosynthesis; coenzyme A biosynthesis. Functionally, catalyzes the NAD(P)H-dependent reduction of ketopantoate into pantoic acid. In Pyrobaculum aerophilum (strain ATCC 51768 / DSM 7523 / JCM 9630 / CIP 104966 / NBRC 100827 / IM2), this protein is 2-dehydropantoate 2-reductase.